Reading from the N-terminus, the 1548-residue chain is Nuclear factor of activated T-cells 5 (1548 aa).

A disordered region spans residues 54–106; sequence QLPPPRETSAASMSQTSGGEAGSPPPAVVAADASSAPSSSMGGACSSFTTSSS. Low complexity predominate over residues 81–106; sequence VVAADASSAPSSSMGGACSSFTTSSS. Ser137 carries the phosphoserine modification. Lys139 carries the post-translational modification N6-acetyllysine. A compositionally biased stretch (polar residues) spans 141–151; the sequence is LTGNTVQQHPS. 3 disordered regions span residues 141–180, 192–237, and 258–282; these read LTGN…QDEG, WMED…CEES, and TTDN…GVKK. Phosphoserine is present on Ser151. Thr152 is modified (phosphothreonine; by CDK5). Ser172 carries the post-translational modification Phosphoserine. A compositionally biased stretch (low complexity) spans 196–209; it reads SPSNFSNMSTSSYN. Basic residues predominate over residues 217–229; the sequence is KSRKRNPKQRPGV. The segment covering 258–277 has biased composition (polar residues); the sequence is TTDNKGNSKAGNGTLDSQKG. The 180-residue stretch at 281–460 folds into the RHD domain; the sequence is KKSPMLCGQY…SPILCTQPAG (180 aa). Residues 310–317 mediate DNA binding; sequence RARYLTEG. Lys572 participates in a covalent cross-link: Glycyl lysine isopeptide (Lys-Gly) (interchain with G-Cter in SUMO1); alternate. Lys572 is covalently cross-linked (Glycyl lysine isopeptide (Lys-Gly) (interchain with G-Cter in SUMO2); alternate). A Phosphoserine modification is found at Ser577. A Glycyl lysine isopeptide (Lys-Gly) (interchain with G-Cter in SUMO2) cross-link involves residue Lys619. Disordered regions lie at residues 659-682, 750-777, 851-892, 970-1010, 1097-1127, and 1257-1388; these read GNAS…QQLQ, TEAP…PNSV, PGMF…QQQQ, SPPA…GAQA, LSQE…QLQP, and MQSN…QEQQ. Low complexity-rich tracts occupy residues 662 to 672 and 751 to 765; these read SFSSPSSSHLS and EAPQ…EQAQ. Polar residues-rich tracts occupy residues 766–777, 851–860, and 876–886; these read IPSNIFPSPNSV, PGMFSSTESA, and VHQQTENTLSS. Low complexity predominate over residues 979–993; sequence TSTTTTPQVATPGST. Polar residues predominate over residues 1113 to 1127; sequence VHSQTSTASSEQLQP. A compositionally biased stretch (low complexity) spans 1264–1283; the sequence is QEQQQQQQQQQQQQQQQQQQ. Composition is skewed to polar residues over residues 1284–1300 and 1308–1333; these read SILF…ASQK and FSPN…SNMA. A compositionally biased stretch (low complexity) spans 1334–1348; the sequence is PMNQEQQPMQFQNQP. A compositionally biased stretch (polar residues) spans 1349–1388; that stretch reads TVSSLQNPGPTPSESPQTSLFHSSPQIQLVQGSPSSQEQQ.

In terms of assembly, homodimer when bound to DNA, completely encircles its DNA target. Interacts with CIDEC; this interaction is direct and retains NFAT5 in the cytoplasm. Does not bind with Fos and Jun transcription factors. Interacts with DDX5 and DDX17; this interaction leads to DDX5/DDX17 recruitment to LNC2 and S100A4 promoters and NFAT5-mediated DDX5/DDX17-enhanced transactivation. Phosphorylated. Phosphorylated at Thr-152 by CDK5 in response to osmotic stress; this phosphorylation mediates its rapid nuclear localization. In terms of processing, poly-ADP-ribosylated by PARP1 in response to DNA damage, promoting recruitment to sites of R-loop-associated DNA damage.

The protein localises to the nucleus. The protein resides in the cytoplasm. Its subcellular location is the chromosome. Its function is as follows. Transcription factor involved, among others, in the transcriptional regulation of osmoprotective and inflammatory genes. Binds the DNA consensus sequence 5'-[ACT][AG]TGGAAA[CAT]A[TA][ATC][CA][ATG][GT][GAC][CG][CT]-3'. Mediates the transcriptional response to hypertonicity. Positively regulates the transcription of LCN2 and S100A4 genes; optimal transactivation of these genes requires the presence of DDX5/DDX17. Also involved in the DNA damage response by preventing formation of R-loops; R-loops are composed of a DNA:RNA hybrid and the associated non-template single-stranded DNA. In Rattus norvegicus (Rat), this protein is Nuclear factor of activated T-cells 5 (Nfat5).